Consider the following 126-residue polypeptide: Adenosine 5'-monophosphoramidase HINT1 (126 aa).

At Ala-2 the chain carries N-acetylalanine. An HIT domain is found at 18-126; sequence IFGKIIRKEI…GGRQMNWPPG (109 aa). Lys-21 and Lys-30 each carry N6-acetyllysine. Residue 43–44 participates in AMP binding; that stretch reads DI. Phosphoserine is present on residues Ser-45 and Ser-72. Residues Asn-99, 105–107, and 112–114 contribute to the AMP site; these read GQS and HLH. A Histidine triad motif motif is present at residues 110 to 114; the sequence is HVHLH. The active-site Tele-AMP-histidine intermediate is the His-112.

Belongs to the HINT family. In terms of assembly, homodimer. Interacts with CDK7. Interacts with RUVBL1 and RUVBL2 and is associated with the LEF1/TCF1-CTNNB1 complex and with a KAT5 histone acetyltransferase complex. Identified in a complex with MITF and CTNNB1. Interacts with CDC34 and RBX1, and is part of a SCF (SKP2-CUL1-F-box protein) E3 ubiquitin-protein ligase complex. Interacts with SUMO1, SUMO2 and RGS17. Interacts with the Ten-1 ICD form of TENM1. Interacts with CALM1; interaction increases in the presence of calcium ions. In terms of tissue distribution, widely expressed.

It is found in the cytoplasm. It localises to the nucleus. It catalyses the reaction adenosine 5'-phosphoramidate + H2O = AMP + NH4(+). Its function is as follows. Exhibits adenosine 5'-monophosphoramidase activity, hydrolyzing purine nucleotide phosphoramidates with a single phosphate group such as adenosine 5'monophosphoramidate (AMP-NH2) to yield AMP and NH2. Hydrolyzes adenosine 5'monophosphomorpholidate (AMP-morpholidate) and guanosine 5'monophosphomorpholidate (GMP-morpholidate). Hydrolyzes lysyl-AMP (AMP-N-epsilon-(N-alpha-acetyl lysine methyl ester)) generated by lysine tRNA ligase. Hydrolyzes Met-AMP, His-AMP, Asp-AMP, lysyl-GMP (GMP-N-epsilon-(N-alpha-acetyl lysine methyl ester)) and AMP-N-alanine methyl ester. Can also convert adenosine 5'-O-phosphorothioate and guanosine 5'-O-phosphorothioate to the corresponding nucleoside 5'-O-phosphates with concomitant release of hydrogen sulfide. In addition, functions as a scaffolding protein that modulates transcriptional activation by the LEF1/TCF1-CTNNB1 complex and by the complex formed with MITF and CTNNB1. Modulates p53/TP53 levels and p53/TP53-mediated apoptosis. Modulates proteasomal degradation of target proteins by the SCF (SKP2-CUL1-F-box protein) E3 ubiquitin-protein ligase complex. Also exhibits SUMO-specific isopeptidase activity, deconjugating SUMO1 from RANGAP1 and RGS17. This chain is Adenosine 5'-monophosphoramidase HINT1 (HINT1), found in Oryctolagus cuniculus (Rabbit).